The following is an 819-amino-acid chain: Pentatricopeptide repeat-containing protein At5g02860 (819 aa).

Residues 57-93 (QNPNSRQPISSQTSRNRNRTRIGKSRDPNLGKPWSYH) are disordered. 18 PPR repeats span residues 172–206 (DNSV…GFSL), 207–241 (DVYS…GCKP), 242–277 (TLIT…GIAP), 278–312 (DAYT…GFSY), 313–347 (DKVT…GFSP), 348–382 (SIVT…GTKP), 383–417 (DVFT…GCKP), 418–452 (NICT…GLSP), 453–487 (DIVT…GFVP), 488–522 (ERET…GVTP), 523–557 (DLST…RCKP), 558–592 (NELT…VIEP), 593–627 (RAVL…GFSP), 628–662 (DITT…GFTP), 663–697 (SMAT…GIKP), 698–732 (DIIS…GIVP), 733–767 (DVIT…GCRP), and 768–802 (NQNT…DPHA).

Belongs to the PPR family. P subfamily.

This is Pentatricopeptide repeat-containing protein At5g02860 from Arabidopsis thaliana (Mouse-ear cress).